A 123-amino-acid polypeptide reads, in one-letter code: Small ribosomal subunit protein uS12 (123 aa).

D89 carries the 3-methylthioaspartic acid modification. The interval 101 to 123 (SLDTAGVKDRKQSRSKYGAKRPK) is disordered. Basic residues predominate over residues 113–123 (SRSKYGAKRPK).

The protein belongs to the universal ribosomal protein uS12 family. Part of the 30S ribosomal subunit. Contacts proteins S8 and S17. May interact with IF1 in the 30S initiation complex.

Its function is as follows. With S4 and S5 plays an important role in translational accuracy. Interacts with and stabilizes bases of the 16S rRNA that are involved in tRNA selection in the A site and with the mRNA backbone. Located at the interface of the 30S and 50S subunits, it traverses the body of the 30S subunit contacting proteins on the other side and probably holding the rRNA structure together. The combined cluster of proteins S8, S12 and S17 appears to hold together the shoulder and platform of the 30S subunit. The polypeptide is Small ribosomal subunit protein uS12 (Laribacter hongkongensis (strain HLHK9)).